A 495-amino-acid polypeptide reads, in one-letter code: 3-octaprenyl-4-hydroxybenzoate carboxy-lyase (495 aa).

Residue Asn172 participates in Mn(2+) binding. Residues 175–177 (IYR), 189–191 (RWL), and 194–195 (RG) contribute to the prenylated FMN site. Glu238 is a binding site for Mn(2+). The active-site Proton donor is Asp287.

Belongs to the UbiD family. In terms of assembly, homohexamer. The cofactor is prenylated FMN. It depends on Mn(2+) as a cofactor.

The protein resides in the cell membrane. It carries out the reaction a 4-hydroxy-3-(all-trans-polyprenyl)benzoate + H(+) = a 2-(all-trans-polyprenyl)phenol + CO2. Its pathway is cofactor biosynthesis; ubiquinone biosynthesis. Its function is as follows. Catalyzes the decarboxylation of 3-octaprenyl-4-hydroxy benzoate to 2-octaprenylphenol, an intermediate step in ubiquinone biosynthesis. This chain is 3-octaprenyl-4-hydroxybenzoate carboxy-lyase, found in Marinobacter nauticus (strain ATCC 700491 / DSM 11845 / VT8) (Marinobacter aquaeolei).